The primary structure comprises 325 residues: Melanocortin receptor 5 (325 aa).

Topologically, residues 1-37 (MNSSFHLHFLDLNLNATEGNLSGPNVKNKSSPCEDMG) are extracellular. 4 N-linked (GlcNAc...) asparagine glycosylation sites follow: N2, N15, N20, and N28. Residues 38-61 (IAVEVFLTLGVISLLENILVIGAI) traverse the membrane as a helical segment. Residues 62 to 73 (VKNKNLHSPMYF) lie on the Cytoplasmic side of the membrane. Residues 74–97 (FVCSLAVADMLVSMSSAWETITIY) traverse the membrane as a helical segment. The Extracellular portion of the chain corresponds to 98-114 (LLNNKHLVIADAFVRHI). A helical membrane pass occupies residues 115–138 (DNVFDSMICISVVASMCSLLAIAV). Residues 139–155 (DRYVTIFYALRYHHIMT) lie on the Cytoplasmic side of the membrane. A helical transmembrane segment spans residues 156 to 179 (ARRSGAIIAGIWAFCTGCGIVFIL). Over 180 to 186 (YSESTYV) the chain is Extracellular. A helical membrane pass occupies residues 187–211 (ILCLISMFFAMLFLLVSLYIHMFLL). At 212 to 239 (ARTHVKRIAALPGASSARQRTSMQGAVT) the chain is on the cytoplasmic side. A helical membrane pass occupies residues 240 to 265 (VTMLLGVFTVCWAPFFLHLTLMLSCP). Topologically, residues 266–273 (QNLYCSRF) are extracellular. A helical membrane pass occupies residues 274–297 (MSHFNMYLILIMCNSVMDPLIYAF). Over 298–325 (RSQEMRKTFKEIICCRGFRIACSFPRRD) the chain is Cytoplasmic. Residues C311 and C312 are each lipidated (S-palmitoyl cysteine).

The protein belongs to the G-protein coupled receptor 1 family. As to expression, expressed in the brain but not in the melanoma cells.

It localises to the cell membrane. Functionally, receptor for MSH (alpha, beta and gamma) and ACTH. The activity of this receptor is mediated by G proteins which activate adenylate cyclase. This receptor is a possible mediator of the immunomodulation properties of melanocortins. The chain is Melanocortin receptor 5 (MC5R) from Homo sapiens (Human).